Reading from the N-terminus, the 331-residue chain is DNA-directed RNA polymerase subunit alpha (331 aa).

The interval 1–246 is alpha N-terminal domain (alpha-NTD); it reads MMQTSRTLHN…GLFSPLQEVS (246 aa). Positions 256 to 331 are alpha C-terminal domain (alpha-CTD); that stretch reads AEDNQKNQIP…LTLPRERSKT (76 aa).

The protein belongs to the RNA polymerase alpha chain family. As to quaternary structure, in cyanobacteria the RNAP catalytic core is composed of 2 alpha, 1 beta, 1 beta', 1 gamma and 1 omega subunit. When a sigma factor is associated with the core the holoenzyme is formed, which can initiate transcription.

The catalysed reaction is RNA(n) + a ribonucleoside 5'-triphosphate = RNA(n+1) + diphosphate. Functionally, DNA-dependent RNA polymerase catalyzes the transcription of DNA into RNA using the four ribonucleoside triphosphates as substrates. This is DNA-directed RNA polymerase subunit alpha from Synechococcus sp. (strain JA-3-3Ab) (Cyanobacteria bacterium Yellowstone A-Prime).